The following is a 590-amino-acid chain: Arginine--tRNA ligase (590 aa).

Positions 131 to 141 (PNIAKEMHVGH) match the 'HIGH' region motif.

This sequence belongs to the class-I aminoacyl-tRNA synthetase family. In terms of assembly, monomer.

It localises to the cytoplasm. The catalysed reaction is tRNA(Arg) + L-arginine + ATP = L-arginyl-tRNA(Arg) + AMP + diphosphate. The polypeptide is Arginine--tRNA ligase (Synechococcus sp. (strain RCC307)).